A 512-amino-acid polypeptide reads, in one-letter code: MTINASNIENSFSKINSHFSKLTDYIWPIKRNEISKFLFITLLMFCILFIQNLIRALKDSIVTTMIGAETISFLKFWGVMPSAFLITVMYVKLVNRMKAENIFYLIISIFLIFFALFAYVIFPNHEILHLRPVTVHNLTTSLPNLKWFILLLSKWSFSLFYIIAELWPNVVFALLFWQFVNNITTVEESKRFYPLFGLLSQTGIYLAGHFLENLSKINYYITDKFALQSSFHTLSIQIILTIVLILGIVSIKTFWLLNHKVLDKKHMSLLRFKTKNKSITIAKSFQMILSSRHIRLIATLLICYGIAINLVEGPWKAAATKIYKTPTEYAAFIGSYLSYTGVFTIFFVLLGSNIVRRIGWFTSAVITPSIVFITGILFFAFNNFEGFAGLIIANFILTDPALVAITIGAIQNVLSKSSKYTLFDSTKEMAYVPLEPEIKISGKAAADVIGTKLGKSGSAFLQSLIFIILPSSSYQSISICLMIIFILTCLTWIWATKELNKEYKNSIKFSQK.

12 helical membrane passes run Ile34–Ile54, Ile71–Val91, Ile102–Phe122, Phe157–Trp177, Phe192–Glu212, Phe231–Ile251, Leu296–Lys316, Ala330–Leu350, Phe361–Phe381, Leu390–Ile410, Val448–Ile468, and Ser476–Thr496.

This sequence belongs to the ADP/ATP translocase tlc family.

Its subcellular location is the cell membrane. Provides the rickettsial cell with host ATP in exchange for rickettsial ADP. This is an obligate exchange system. This energy acquiring activity is an important component of rickettsial parasitism. This Rickettsia typhi (strain ATCC VR-144 / Wilmington) protein is ADP,ATP carrier protein 4 (tlcD).